The following is a 498-amino-acid chain: E3 ubiquitin-protein ligase TRIM22 (498 aa).

The RING-type zinc-finger motif lies at 15–60; sequence CPICLELLTEPLSLDCGHSFCQACITAKIKESVIISRGESSCPVCQ. The B box-type zinc finger occupies 92-133; it reads QKRDVCEHHGKKLQIFCKEDGKVICWVCELSQEHQGHQTFRI. Residues C97, H100, C119, and H125 each contribute to the Zn(2+) site. Positions 132 to 248 form a coiled coil; it reads RINEVVKECQ…RRLRGSSVEM (117 aa). A Nuclear localization signal motif is present at residues 257-275; that stretch reads KRSESWTLKKPKSVSKKLK. In terms of domain architecture, B30.2/SPRY spans 283-498; that stretch reads LSGMLQVLKE…VPMTVCPPSS (216 aa).

This sequence belongs to the TRIM/RBCC family. Homotrimer. In terms of assembly, (Microbial infection) Interacts with HIV-1 Gag polyprotein; this interaction seems to reduce gag production or virus budding. As to quaternary structure, (Microbial infection) Interacts with EMCV protease 3C; this interaction leads to viral protease ubiquitination. Post-translationally, auto-ubiquitinated. In terms of tissue distribution, strongly expressed in peripheral blood leukocytes, spleen, thymus, and ovary. Expressed at basal levels in other tissues.

It is found in the cytoplasm. The protein localises to the nucleus. It localises to the nucleus speckle. The protein resides in the cajal body. It carries out the reaction S-ubiquitinyl-[E2 ubiquitin-conjugating enzyme]-L-cysteine + [acceptor protein]-L-lysine = [E2 ubiquitin-conjugating enzyme]-L-cysteine + N(6)-ubiquitinyl-[acceptor protein]-L-lysine.. It participates in protein modification; protein ubiquitination. Interferon-induced E3 ubiquitin ligase that plays important roles in innate and adaptive immunity. Restricts the replication of many viruses including HIV-1, encephalomyocarditis virus (EMCV), hepatitis B virus (HBV), hepatitis C virus (HCV) or Zika virus (ZIKV). Mechanistically, negatively regulates HCV replication by promoting ubiquitination and subsequent degradation of viral NS5A. Also acts by promoting the degradation of Zika virus NS1 and NS3 proteins through proteasomal degradation. Acts as a suppressor of basal HIV-1 LTR-driven transcription by preventing Sp1 binding to the HIV-1 promoter. Also plays a role in antiviral immunity by co-regulating together with NT5C2 the RIGI/NF-kappa-B pathway by promoting 'Lys-63'-linked ubiquitination of RIGI, while NT5C2 is responsible for 'Lys-48'-linked ubiquitination of RIGI. Participates in adaptive immunity by suppressing the amount of MHC class II protein in a negative feedback manner in order to limit the extent of MHC class II induction. This chain is E3 ubiquitin-protein ligase TRIM22 (TRIM22), found in Homo sapiens (Human).